The following is a 72-amino-acid chain: Translation initiation factor IF-1 (72 aa).

Residues 1–72 (MTKEEAIEVD…SRGRIMFRER (72 aa)) form the S1-like domain.

This sequence belongs to the IF-1 family. In terms of assembly, component of the 30S ribosomal translation pre-initiation complex which assembles on the 30S ribosome in the order IF-2 and IF-3, IF-1 and N-formylmethionyl-tRNA(fMet); mRNA recruitment can occur at any time during PIC assembly.

The protein localises to the cytoplasm. In terms of biological role, one of the essential components for the initiation of protein synthesis. Stabilizes the binding of IF-2 and IF-3 on the 30S subunit to which N-formylmethionyl-tRNA(fMet) subsequently binds. Helps modulate mRNA selection, yielding the 30S pre-initiation complex (PIC). Upon addition of the 50S ribosomal subunit IF-1, IF-2 and IF-3 are released leaving the mature 70S translation initiation complex. The sequence is that of Translation initiation factor IF-1 from Treponema pallidum (strain Nichols).